A 1379-amino-acid chain; its full sequence is DNA-directed RNA polymerase subunit beta'' (1379 aa).

Cys-220, Cys-291, Cys-298, and Cys-301 together coordinate Zn(2+).

The protein belongs to the RNA polymerase beta' chain family. RpoC2 subfamily. In terms of assembly, in plastids the minimal PEP RNA polymerase catalytic core is composed of four subunits: alpha, beta, beta', and beta''. When a (nuclear-encoded) sigma factor is associated with the core the holoenzyme is formed, which can initiate transcription. Zn(2+) is required as a cofactor.

It localises to the plastid. It catalyses the reaction RNA(n) + a ribonucleoside 5'-triphosphate = RNA(n+1) + diphosphate. Functionally, DNA-dependent RNA polymerase catalyzes the transcription of DNA into RNA using the four ribonucleoside triphosphates as substrates. The chain is DNA-directed RNA polymerase subunit beta'' from Cuscuta reflexa (Southern Asian dodder).